The primary structure comprises 349 residues: MSRNELFDVTVIGGGPAGLYSAFYSGLRGMKAKIIEYQPMLGGKVHVYPEKMIWDVGGLTPISGAKLIEQLVQQGLTFHPEVLLNEKVESIARNEEGLFELHTAASGVHLSKTVIVAVGGGILNPQKLQIEGAERFEVSNLNYTVKSLQHFKDKTVIVSGGGNSAVDWANELEPVAKKVYLAYRKDALSGHEAQVDQLLNSSVSCFFHTEITKLIASEDHEVIERVELTNAQTGEVMELPVDEVVINHGYERDTSLLENSRLDVTRVDDYYIAGTSNCQSSVPGLYAAGDIVHYEGKLHLIAGAFQDAANAVNSAKRFIDPEAHKSAMVSSHNEVFKERNRELVKKMFV.

FAD contacts are provided by Glu36, Lys44, Tyr48, Val88, Leu123, Asp290, and Ser331.

Belongs to the ferredoxin--NADP reductase type 2 family. In terms of assembly, homodimer. It depends on FAD as a cofactor.

The catalysed reaction is 2 reduced [2Fe-2S]-[ferredoxin] + NADP(+) + H(+) = 2 oxidized [2Fe-2S]-[ferredoxin] + NADPH. This Bacillus licheniformis (strain ATCC 14580 / DSM 13 / JCM 2505 / CCUG 7422 / NBRC 12200 / NCIMB 9375 / NCTC 10341 / NRRL NRS-1264 / Gibson 46) protein is Ferredoxin--NADP reductase 1.